The primary structure comprises 1549 residues: Structural maintenance of chromosomes protein 4 (1549 aa).

The disordered stretch occupies residues 1 to 78 (MPPKTSAAPP…LFSLQLPSRP (78 aa)). Residues 26-36 (KPQKKTTKPVN) are compositionally biased toward basic residues. The span at 37-59 (RHKEGSKDPEEELQRAVNEKFDG) shows a compositional bias: basic and acidic residues. Position 121–128 (121–128 (GPNGSGKS)) interacts with ATP. Residues 326–604 (MKLEQRRRQR…QNSSCSSSNK (279 aa)) are a coiled coil. Basic and acidic residues-rich tracts occupy residues 396–407 (LSDLGTEETRRK) and 420–444 (AEAE…AERK). 2 disordered regions span residues 396–444 (LSDL…AERK) and 460–485 (KTAN…EEQK). The SMC hinge domain maps to 619 to 734 (KSFHGRLGDL…GDSTQEAQRM (116 aa)). 2 coiled-coil regions span residues 786-1058 (KAAE…KVNR) and 1144-1182 (EKIN…SIKA). Residues 1440-1459 (IQTTRDVTSRPQSKATTSGD) show a composition bias toward polar residues. The interval 1440–1549 (IQTTRDVTSR…AIVDDDDDME (110 aa)) is disordered. Basic and acidic residues predominate over residues 1460-1474 (GTERPASRSASRPES). Residues 1510–1523 (TPPSKRSNSASTPK) are compositionally biased toward polar residues.

The protein belongs to the SMC family. SMC4 subfamily. In terms of assembly, component of the condensin I complex, which contains the mix-1/SMC2 and smc-4/SMC4 heterodimer, and three non SMC subunits that probably regulate the complex: dpy-26, capg-1 and dpy-28. Within the complex, interacts with mix-1, dpy-26, capg-1 and dpy-28. Component of the condensin II complex, which contains the mix-1/SMC2 and smc-4/SMC4 heterodimer, and three non SMC subunits, kle-2, capg-2 and hcp-6 that probably regulate the complex. Within the complex, interacts with mix-1, kle-2, capg-2 and hcp-6. Interacts with smcl-1.

It is found in the nucleus. The protein localises to the chromosome. In terms of biological role, central component of the condensin I complex, a complex required for conversion of interphase chromatin into mitotic-like condense chromosomes. The condensin I complex introduces positive supercoils into relaxed DNA in the presence of type I topoisomerases. Converts nicked DNA into positive knotted forms in the presence of type II topoisomerases. Also a central component of the condensin II complex, a complex that seems to play a role in prophase chromosome condensation. Both the condensin complex I and II play a role in meiotic and mitotic chromosome segregation. Plays a role in robust cytokinesis upon the presence of chromatin obstructions. The polypeptide is Structural maintenance of chromosomes protein 4 (smc-4) (Caenorhabditis elegans).